Here is a 427-residue protein sequence, read N- to C-terminus: Membrane-bound hydrogenase subunit alpha (427 aa).

Ni(2+) contacts are provided by Cys-68, Cys-71, Cys-374, and Cys-377.

Belongs to the complex I 49 kDa subunit family. The membrane-bound hydrogenase complex is composed of MbhK and MbhL, and may also contain MbhJ. Requires Ni(2+) as cofactor.

It is found in the cell membrane. It catalyses the reaction H2 + 2 oxidized [2Fe-2S]-[ferredoxin] = 2 reduced [2Fe-2S]-[ferredoxin] + 2 H(+). With respect to regulation, inhibited by 0.1 mM Cu(2+). Its function is as follows. Alpha subunit of a hydrogen-evolving hydrogenase that utilizes protons both as a substrate for hydrogen production and proton translocation. Acts by coupling the redox reaction via ferredoxin and iron-sulfur (Fe-S) clusters to proton translocation across the membrane thereby conserving the redox energy in a proton gradient. The chain is Membrane-bound hydrogenase subunit alpha from Pyrococcus furiosus (strain ATCC 43587 / DSM 3638 / JCM 8422 / Vc1).